A 424-amino-acid chain; its full sequence is Imidazolonepropionase (424 aa).

Residues His85 and His87 each coordinate Fe(3+). Zn(2+) contacts are provided by His85 and His87. 4-imidazolone-5-propanoate is bound by residues Arg94, Tyr157, and His190. An N-formimidoyl-L-glutamate-binding site is contributed by Tyr157. His255 provides a ligand contact to Fe(3+). His255 contacts Zn(2+). Residue Glu258 participates in 4-imidazolone-5-propanoate binding. Residue Asp329 coordinates Fe(3+). Asp329 is a Zn(2+) binding site. N-formimidoyl-L-glutamate-binding residues include Asn331 and Gly333. Ser334 lines the 4-imidazolone-5-propanoate pocket.

This sequence belongs to the metallo-dependent hydrolases superfamily. HutI family. The cofactor is Zn(2+). Fe(3+) serves as cofactor.

Its subcellular location is the cytoplasm. The catalysed reaction is 4-imidazolone-5-propanoate + H2O = N-formimidoyl-L-glutamate. The protein operates within amino-acid degradation; L-histidine degradation into L-glutamate; N-formimidoyl-L-glutamate from L-histidine: step 3/3. Catalyzes the hydrolytic cleavage of the carbon-nitrogen bond in imidazolone-5-propanoate to yield N-formimidoyl-L-glutamate. It is the third step in the universal histidine degradation pathway. The chain is Imidazolonepropionase from Brevibacillus brevis (strain 47 / JCM 6285 / NBRC 100599).